The primary structure comprises 819 residues: Leucine--tRNA ligase (819 aa).

The short motif at 51–61 is the 'HIGH' region element; that stretch reads PYPSGNLHIGH. The 'KMSKS' region signature appears at 586–590; sequence KMSKS. Lys589 contacts ATP.

This sequence belongs to the class-I aminoacyl-tRNA synthetase family.

It localises to the cytoplasm. It catalyses the reaction tRNA(Leu) + L-leucine + ATP = L-leucyl-tRNA(Leu) + AMP + diphosphate. The sequence is that of Leucine--tRNA ligase from Deinococcus geothermalis (strain DSM 11300 / CIP 105573 / AG-3a).